Reading from the N-terminus, the 423-residue chain is Adenylosuccinate synthetase (423 aa).

GTP-binding positions include glycine 12 to lysine 18 and glycine 40 to threonine 42. The active-site Proton acceptor is aspartate 13. Mg(2+) contacts are provided by aspartate 13 and glycine 40. Residues aspartate 13–lysine 16, asparagine 38–histidine 41, threonine 129, arginine 143, glutamine 221, threonine 236, and arginine 300 contribute to the IMP site. The Proton donor role is filled by histidine 41. Substrate is bound at residue serine 296 to arginine 302. Residues arginine 302 and serine 408–glycine 410 each bind GTP.

The protein belongs to the adenylosuccinate synthetase family. In terms of assembly, homodimer. Requires Mg(2+) as cofactor.

It localises to the cytoplasm. The catalysed reaction is IMP + L-aspartate + GTP = N(6)-(1,2-dicarboxyethyl)-AMP + GDP + phosphate + 2 H(+). Its pathway is purine metabolism; AMP biosynthesis via de novo pathway; AMP from IMP: step 1/2. In terms of biological role, plays an important role in the de novo pathway of purine nucleotide biosynthesis. Catalyzes the first committed step in the biosynthesis of AMP from IMP. In Bacteroides thetaiotaomicron (strain ATCC 29148 / DSM 2079 / JCM 5827 / CCUG 10774 / NCTC 10582 / VPI-5482 / E50), this protein is Adenylosuccinate synthetase.